Here is a 738-residue protein sequence, read N- to C-terminus: Nucleoprotein (738 aa).

Residues Val-334–Leu-363 are a coiled coil. Residues Gly-418–Ile-640 are disordered. Acidic residues predominate over residues Pro-461–Ala-476. Residues Pro-544–Pro-564 are compositionally biased toward polar residues. Over residues Glu-567 to Glu-594 the composition is skewed to acidic residues. Residues Val-616 to Ser-625 are compositionally biased toward polar residues.

This sequence belongs to the filoviruses nucleoprotein family. As to quaternary structure, homooligomer. Homomultimerizes to form the nucleocapsid. Binds to viral genomic RNA. Interacts with VP35 and VP30 to form the nucleocapsid. Interacts with host PPP2R5C; this interaction leads to VP30 dephosphorylation and viral transcription. Interacts with VP24; this interaction facilitates nucleocapsid assembly and genome packaging. Interacts with matrix protein VP40; this interaction allows recruitment of the nucleocapsid into progeny virions. Interacts with host STAU1. Interacts with host NXF1 (via RNA-binding domain); this interaction recruits NXF1 to the inclusion bodies were viral replication takes place, probably to export viral mRNA-NXF1 complexes from these sites. Interacts with host CCDC92; this interaction sequesters NP in the host cytoplasm. Interacts with host TRIM14. Post-translationally, phosphorylated and O-glycosylated by host. Acetylated by host EP300 in vitro.

The protein resides in the virion. It is found in the host cytoplasm. In terms of biological role, oligomerizes into helical capsid to encapsidate the viral genome, protecting it from nucleases and the cellular innate immune response. VP35 binds to and stabilizes monomeric NP, keeping it soluble. Upon virus replication, NP is recruited to bind cooperatively viral genomic RNA and VP35 is released. The encapsidated genomic RNA is termed the nucleocapsid and serves as template for transcription and replication. The nucleocapsid is helical with a pitch of 10.81 NP per turn and a diameter of about 22nm. Each NP binds to six nucleotides of viral genomic RNA, three being exposed to the solvant and three hidden into the nucleocapsid. Also recruits host PPP2R5C phosphatase to dephosphorylate VP30 and thereby promote viral transcription. Upon virion assembly and budding, NP binds to VP24 and possibly host STAU1. The polypeptide is Nucleoprotein (NP) (Sudan ebolavirus (strain Human/Uganda/Gulu/2000) (SEBOV)).